Here is a 209-residue protein sequence, read N- to C-terminus: ATP-dependent Clp protease proteolytic subunit (209 aa).

The Nucleophile role is filled by Ser107. His132 is a catalytic residue.

This sequence belongs to the peptidase S14 family. As to quaternary structure, fourteen ClpP subunits assemble into 2 heptameric rings which stack back to back to give a disk-like structure with a central cavity, resembling the structure of eukaryotic proteasomes.

The protein localises to the cytoplasm. The catalysed reaction is Hydrolysis of proteins to small peptides in the presence of ATP and magnesium. alpha-casein is the usual test substrate. In the absence of ATP, only oligopeptides shorter than five residues are hydrolyzed (such as succinyl-Leu-Tyr-|-NHMec, and Leu-Tyr-Leu-|-Tyr-Trp, in which cleavage of the -Tyr-|-Leu- and -Tyr-|-Trp bonds also occurs).. In terms of biological role, cleaves peptides in various proteins in a process that requires ATP hydrolysis. Has a chymotrypsin-like activity. Plays a major role in the degradation of misfolded proteins. The protein is ATP-dependent Clp protease proteolytic subunit of Methylobacterium nodulans (strain LMG 21967 / CNCM I-2342 / ORS 2060).